The sequence spans 231 residues: Chromosome partition protein MukE (231 aa).

A disordered region spans residues 197–231 (RDGEAMPIEGGLSLDDSENDETSDNSAEGTGDEQP).

The protein belongs to the MukE family. In terms of assembly, interacts, and probably forms a ternary complex, with MukF and MukB. The complex formation is stimulated by calcium or magnesium.

It is found in the cytoplasm. The protein localises to the nucleoid. Its function is as follows. Involved in chromosome condensation, segregation and cell cycle progression. May participate in facilitating chromosome segregation by condensation DNA from both sides of a centrally located replisome during cell division. Probably acts via its interaction with MukB and MukF. This Photorhabdus laumondii subsp. laumondii (strain DSM 15139 / CIP 105565 / TT01) (Photorhabdus luminescens subsp. laumondii) protein is Chromosome partition protein MukE.